Consider the following 20-residue polypeptide: Implantin (20 aa).

This sequence belongs to the EF-1-beta/EF-1-delta family. In terms of processing, phosphorylated. In terms of tissue distribution, uterus and embryo.

It localises to the cytoplasm. It is found in the nucleus. Its function is as follows. Binds DNA. In Mus musculus (Mouse), this protein is Implantin.